Consider the following 417-residue polypeptide: Cobalamin binding intrinsic factor (417 aa).

Positions 1–18 (MAWLTLYLLSVLWAVAGT) are cleaved as a signal peptide. 3 disulfides stabilise this stretch: cysteine 26-cysteine 246, cysteine 103-cysteine 288, and cysteine 143-cysteine 182. Position 171 (aspartate 171) interacts with cob(II)alamin. Serine 191 carries the phosphoserine modification. Residues aspartate 222 and glutamine 270 each coordinate cob(II)alamin. N-linked (GlcNAc...) asparagine glycans are attached at residues asparagine 311 and asparagine 330. Cob(II)alamin contacts are provided by residues 365–370 (SWGLIV) and 386–395 (WEFLSGKTPL). Asparagine 413 carries N-linked (GlcNAc...) asparagine glycosylation.

The protein belongs to the eukaryotic cobalamin transport proteins family. Interacts with CUBN (via CUB domains). In terms of tissue distribution, gastric mucosa.

It localises to the secreted. In terms of biological role, promotes absorption of the essential vitamin cobalamin (Cbl) in the ileum. After interaction with CUBN, the CBLIF-cobalamin complex is internalized via receptor-mediated endocytosis. The polypeptide is Cobalamin binding intrinsic factor (Cblif) (Mus musculus (Mouse)).